The primary structure comprises 131 residues: Fluoride-specific ion channel FluC 2 (131 aa).

Helical transmembrane passes span 4–24 (IIQG…ARFW), 46–66 (VSGA…HGVF), 71–91 (PWLF…SFAL), and 105–125 (AISN…LGFA). 2 residues coordinate Na(+): glycine 81 and threonine 84.

It belongs to the fluoride channel Fluc/FEX (TC 1.A.43) family.

Its subcellular location is the cell inner membrane. The enzyme catalyses fluoride(in) = fluoride(out). Na(+) is not transported, but it plays an essential structural role and its presence is essential for fluoride channel function. Functionally, fluoride-specific ion channel. Important for reducing fluoride concentration in the cell, thus reducing its toxicity. The polypeptide is Fluoride-specific ion channel FluC 2 (Rhodopseudomonas palustris (strain BisB18)).